A 1466-amino-acid polypeptide reads, in one-letter code: Retrovirus-related Pol polyprotein from transposon RE1 (1466 aa).

The segment at serine 227–asparagine 270 is disordered. Over residues arginine 229–asparagine 254 the composition is skewed to low complexity. Polar residues predominate over residues serine 255–asparagine 270. The CCHC-type zinc-finger motif lies at lysine 278–glutamine 294. Aspartate 334 functions as the For protease activity in the catalytic mechanism. The Integrase catalytic domain occupies asparagine 519–serine 682. Mg(2+)-binding residues include aspartate 530 and aspartate 592. The disordered stretch occupies residues tryptophan 772 to histidine 927. Composition is skewed to low complexity over residues alanine 796 to serine 827 and glutamine 836 to serine 898. A compositionally biased stretch (pro residues) spans proline 899–leucine 912. Positions isoleucine 915–histidine 927 are enriched in polar residues. Positions asparagine 982–methionine 1225 constitute a Reverse transcriptase Ty1/copia-type domain.

The catalysed reaction is DNA(n) + a 2'-deoxyribonucleoside 5'-triphosphate = DNA(n+1) + diphosphate. This Arabidopsis thaliana (Mouse-ear cress) protein is Retrovirus-related Pol polyprotein from transposon RE1 (RE1).